We begin with the raw amino-acid sequence, 353 residues long: Phosphate acyltransferase (353 aa).

Belongs to the PlsX family. As to quaternary structure, homodimer. Probably interacts with PlsY.

The protein resides in the cytoplasm. The enzyme catalyses a fatty acyl-[ACP] + phosphate = an acyl phosphate + holo-[ACP]. Its pathway is lipid metabolism; phospholipid metabolism. In terms of biological role, catalyzes the reversible formation of acyl-phosphate (acyl-PO(4)) from acyl-[acyl-carrier-protein] (acyl-ACP). This enzyme utilizes acyl-ACP as fatty acyl donor, but not acyl-CoA. The protein is Phosphate acyltransferase of Afipia carboxidovorans (strain ATCC 49405 / DSM 1227 / KCTC 32145 / OM5) (Oligotropha carboxidovorans).